Reading from the N-terminus, the 385-residue chain is Linearmycin resistance permease protein LnrN (385 aa).

The next 6 membrane-spanning stretches (helical) occupy residues 22–42 (YLIM…MLSG), 198–218 (AAGF…GTIL), 239–259 (IGAG…GILL), 274–294 (AAVI…GLMI), 305–325 (LAFG…YWPI), and 360–380 (DILG…AAGL). The ABC transmembrane type-2 domain maps to 163-382 (KTVFAKKHED…AITFAAGLKA (220 aa)).

Belongs to the ABC-2 integral membrane protein family. In terms of assembly, the complex is composed of two ATP-binding proteins (LnrL) and two transmembrane proteins (LnrM and LnrN).

The protein localises to the cell membrane. Required for resistance to linearmycins, a family of antibiotic-specialized metabolites produced by some streptomycetes. Part of the ABC transporter complex LnrLMN that probably facilitates linearmycin removal from the membrane. Responsible for the translocation of the substrate across the membrane. Also mediates KinC-dependent biofilm morphology. The protein is Linearmycin resistance permease protein LnrN of Bacillus subtilis (strain 168).